The primary structure comprises 140 residues: Translation initiation factor 2 subunit beta (140 aa).

This sequence belongs to the eIF-2-beta/eIF-5 family. In terms of assembly, heterotrimer composed of an alpha, a beta and a gamma chain.

EIF-2 functions in the early steps of protein synthesis by forming a ternary complex with GTP and initiator tRNA. The protein is Translation initiation factor 2 subunit beta of Metallosphaera sedula (strain ATCC 51363 / DSM 5348 / JCM 9185 / NBRC 15509 / TH2).